Here is a 92-residue protein sequence, read N- to C-terminus: Small ribosomal subunit protein uS19 (92 aa).

It belongs to the universal ribosomal protein uS19 family.

Functionally, protein S19 forms a complex with S13 that binds strongly to the 16S ribosomal RNA. In Azorhizobium caulinodans (strain ATCC 43989 / DSM 5975 / JCM 20966 / LMG 6465 / NBRC 14845 / NCIMB 13405 / ORS 571), this protein is Small ribosomal subunit protein uS19.